The sequence spans 243 residues: MTLIAAHHLAVRRGRDEILSDVSLSVAPREIVTIVGPNGSGKSTLLRALLGILPAAAGRVSRRPGLRIGYVPQRLQVDGTLPLTAARFLSLPRRRAPAEVAAALERVGVPEVADRQLADLSGGQFQRVLLARALLTEPELLMLDEPTQGLDQPGEAAFYRLIEEVRSTTGAAILMVSHDLHVVMAASDRVICLNRHVCCEGTPRVVSNAPEYRALFGHGTQGALALYRHEHDHDHTHDHSHHA.

The 216-residue stretch at 4-219 (IAAHHLAVRR…PEYRALFGHG (216 aa)) folds into the ABC transporter domain. 36–43 (GPNGSGKS) is a binding site for ATP.

This sequence belongs to the ABC transporter superfamily. Zinc importer (TC 3.A.1.15.5) family. In terms of assembly, the complex is composed of two ATP-binding proteins (ZnuC), two transmembrane proteins (ZnuB) and a solute-binding protein (ZnuA).

The protein localises to the cell inner membrane. The catalysed reaction is Zn(2+)(out) + ATP(in) + H2O(in) = Zn(2+)(in) + ADP(in) + phosphate(in) + H(+)(in). Part of the ABC transporter complex ZnuABC involved in zinc import. Responsible for energy coupling to the transport system. The protein is Zinc import ATP-binding protein ZnuC of Cereibacter sphaeroides (strain ATCC 17023 / DSM 158 / JCM 6121 / CCUG 31486 / LMG 2827 / NBRC 12203 / NCIMB 8253 / ATH 2.4.1.) (Rhodobacter sphaeroides).